Reading from the N-terminus, the 623-residue chain is Set1/Ash2 histone methyltransferase complex subunit ASH2 (623 aa).

Over residues 1–18 (MAAAGAGPGPGVSAGPGP) the composition is skewed to gly residues. Residues 1–62 (MAAAGAGPGP…SGEAESGDAN (62 aa)) form a PHD-type; atypical zinc finger. The disordered stretch occupies residues 1 to 99 (MAAAGAGPGP…MDTQAGSVDE (99 aa)). Positions 36 to 56 (AAGAGEGPSAAPGAEPSSGEA) are enriched in low complexity. The interval 63–172 (LVDVSGLETE…MCLSALANLT (110 aa)) is DNA-binding. Residues 84 to 95 (GDTSEVMDTQAG) are compositionally biased toward polar residues. A Phosphoserine modification is found at Ser96. A C4-type zinc finger spans residues 112-145 (CGICTKWFTADTFGIDTSSCLPFMTNYSFHCNVC). The segment covering 230-247 (LVKEHPDPGSKDPEEDYP) has biased composition (basic and acidic residues). The interval 230 to 326 (LVKEHPDPGS…AQRLPPHGYP (97 aa)) is disordered. The segment covering 265–277 (NQKQSSAVSASGN) has biased composition (polar residues). Positions 278-290 (LNGGIAAGSSGKG) are enriched in gly residues. Arg291 carries the post-translational modification Asymmetric dimethylarginine; by PRMT1 and PRMT5. The residue at position 311 (Ser311) is a Phosphoserine. An interaction with RBBP5 region spans residues 311-623 (SDPLFSAQRL…DGRRSPPWEP (313 aa)). A B30.2/SPRY domain is found at 355 to 578 (LDCWAGKPIP…VSINFGPSFK (224 aa)).

Interacts with HCFC1. Core component of several methyltransferase-containing complexes including MLL1/MLL, MLL2/3 (also named ASCOM complex) and MLL4/WBP7. Each complex is at least composed of ASH2L, RBBP5, WDR5, DPY30, one or more specific histone methyltransferases (KMT2A/MLL1, KMT2D/MLL2, KMT2C/MLL3 and KMT2B/MLL4), and the facultative components PAGR1, BACC1, CHD8, E2F6, HCFC1, HCFC2, HSP70, INO80C, KDM6A, KANSL1, LAS1L, MAX, MCRS1, MEN1, MGA, KAT8/MOF, NCOA6, PAXIP1/PTIP, PELP1, PHF20, PRP31, RING2, RUVB1/TIP49A, RUVB2/TIP49B, SENP3, TAF1, TAF4, TAF6, TAF7, TAF9, TEX10 and alpha- and beta-tubulin. Component of the SET1 complex, at least composed of the catalytic subunit (SETD1A or SETD1B), WDR5, WDR82, RBBP5, ASH2L/ASH2, CXXC1/CFP1, HCFC1 and DPY30. Found in a complex with RBBP5, ASH2L, DPY30, KMT2A, KMT2D and WDR5. Component of a histone methylation complex composed of at least ZNF335, RBBP5, ASH2L and WDR5; the complex may have histone H3-specific methyltransferase activity, however does not have specificity for 'Lys-4' of histone H3. Within the complex, interacts with ZNF335. Interacts with RBBP5. Components of this complex may associate with components of a nuclear receptor-mediated transcription complex to form a complex at least composed of ZNF335, HCFC1, CCAR2, EMSY, MKI67, RBBP5, ASH2L and WDR5. Within this complex also interacts with CCAR2 and EMSY. Interacts with DPY30. Interacts with SETD1A and SETD1B. Post-translationally, both monomethylated and dimethylated on arginine residues in the C-terminus. Arg-291 is the major site. Methylation is not required for nuclear localization, nor for MLL complex integrity or maintenance of global histone H3K4me3 levels. As to expression, ubiquitously expressed, with abundant expression in the heart, skeletal muscle and kidney. Low expression is seen in spleen, lung and testis.

Its subcellular location is the nucleus. Functionally, transcriptional regulator. Component or associated component of some histone methyltransferase complexes which regulates transcription through recruitment of those complexes to gene promoters. Component of the Set1/Ash2 histone methyltransferase (HMT) complex, a complex that specifically methylates 'Lys-4' of histone H3, but not if the neighboring 'Lys-9' residue is already methylated. As part of the MLL1/MLL complex it is involved in methylation and dimethylation at 'Lys-4' of histone H3. May play a role in hematopoiesis. In association with RBBP5 and WDR5, stimulates the histone methyltransferase activities of KMT2A, KMT2B, KMT2C, KMT2D, SETD1A and SETD1B. The polypeptide is Set1/Ash2 histone methyltransferase complex subunit ASH2 (Ash2l) (Mus musculus (Mouse)).